Reading from the N-terminus, the 85-residue chain is Homeobox protein knotted-1-like 8 (85 aa).

The 21-residue stretch at 1 to 21 (ELKHQLLRKYGGYLGGLRQEF) folds into the ELK domain. Residues 22-85 (SKRKKKGKLP…NQRKRHWKPA (64 aa)) constitute a DNA-binding region (homeobox; TALE-type).

The protein belongs to the TALE/KNOX homeobox family. In terms of tissue distribution, strongly expressed in ear inflorescence primordia and shoot meristem. Weakly expressed in embryos. Absent from leaves.

The protein resides in the nucleus. Probably binds to the DNA sequence 5'-TGAC-3'. This is Homeobox protein knotted-1-like 8 (KNOX8) from Zea mays (Maize).